The sequence spans 90 residues: MAKANEHFFYVLKCNDNSYYGGYTTDVTRREAEHNAGIRCKYTKTRRPVKVIHFEKFETRSEATKAEAAFKKLSRKNKDSYLIEREEDSE.

One can recognise a GIY-YIG domain in the interval 5-83 (NEHFFYVLKC…SRKNKDSYLI (79 aa)).

It belongs to the UPF0213 family.

This is UPF0213 protein lwe0147 from Listeria welshimeri serovar 6b (strain ATCC 35897 / DSM 20650 / CCUG 15529 / CIP 8149 / NCTC 11857 / SLCC 5334 / V8).